A 132-amino-acid polypeptide reads, in one-letter code: DNA-directed RNA polymerase subunit omega (132 aa).

The protein belongs to the RNA polymerase subunit omega family. The RNAP catalytic core consists of 2 alpha, 1 beta, 1 beta' and 1 omega subunit. When a sigma factor is associated with the core the holoenzyme is formed, which can initiate transcription.

It carries out the reaction RNA(n) + a ribonucleoside 5'-triphosphate = RNA(n+1) + diphosphate. Promotes RNA polymerase assembly. Latches the N- and C-terminal regions of the beta' subunit thereby facilitating its interaction with the beta and alpha subunits. The chain is DNA-directed RNA polymerase subunit omega from Ehrlichia ruminantium (strain Welgevonden).